Reading from the N-terminus, the 522-residue chain is Tetratricopeptide repeat and J domain-containing co-chaperone DNJ1 (522 aa).

The signal sequence occupies residues 1 to 22 (MKGFLLVALPVLFLSLSTQVFG). 7 TPR repeats span residues 29-62 (AAQI…DPTG), 63-96 (YANY…NPGF), 97-130 (VQAH…KSDS), 142-175 (GEAA…GPNS), 210-243 (TYLP…DPDS), 256-289 (LEKD…LVRF), and 356-389 (VDSW…SGRS). Residues 410 to 471 (DYYKVLGVPR…ELRQRYDNGD (62 aa)) form the J domain. The tract at residues 465–494 (QRYDNGDDPNDPTGGQQHNPFAHHGGGMPF) is disordered.

Its subcellular location is the endoplasmic reticulum lumen. Its function is as follows. Endoplasmic reticulum co-chaperone crucial for survival and virulence factor production at elevated temperatures representative of febrile patients during infection. Contributes to virulence in a mouse model of cryptococcosis. With chaperone CNE1, coordinately maintains ER homeostasis and contributes to maintenance of cell wall architecture. In Cryptococcus neoformans var. grubii serotype A (strain H99 / ATCC 208821 / CBS 10515 / FGSC 9487) (Filobasidiella neoformans var. grubii), this protein is Tetratricopeptide repeat and J domain-containing co-chaperone DNJ1.